The primary structure comprises 193 residues: ATP-dependent Clp protease proteolytic subunit 2 (193 aa).

Residue serine 98 is the Nucleophile of the active site. Histidine 123 is an active-site residue.

Belongs to the peptidase S14 family. As to quaternary structure, fourteen ClpP subunits assemble into 2 heptameric rings which stack back to back to give a disk-like structure with a central cavity, resembling the structure of eukaryotic proteasomes.

The protein localises to the cytoplasm. It catalyses the reaction Hydrolysis of proteins to small peptides in the presence of ATP and magnesium. alpha-casein is the usual test substrate. In the absence of ATP, only oligopeptides shorter than five residues are hydrolyzed (such as succinyl-Leu-Tyr-|-NHMec, and Leu-Tyr-Leu-|-Tyr-Trp, in which cleavage of the -Tyr-|-Leu- and -Tyr-|-Trp bonds also occurs).. In terms of biological role, cleaves peptides in various proteins in a process that requires ATP hydrolysis. Has a chymotrypsin-like activity. Plays a major role in the degradation of misfolded proteins. The polypeptide is ATP-dependent Clp protease proteolytic subunit 2 (Bacillus cereus (strain ATCC 14579 / DSM 31 / CCUG 7414 / JCM 2152 / NBRC 15305 / NCIMB 9373 / NCTC 2599 / NRRL B-3711)).